The following is a 124-amino-acid chain: Fluoride-specific ion channel FluC 2 (124 aa).

4 helical membrane-spanning segments follow: residues 1-21 (MSDILFVSIGAILGANIRFQI), 34-54 (FLILIINTFASFGLGLFLSLV), 66-86 (LILFFSIGFFGSLSTFSSFVY), and 103-123 (LFIISVSIGIIAFAFGLFLGT). Residues Gly-76 and Ser-79 each contribute to the Na(+) site.

Belongs to the fluoride channel Fluc/FEX (TC 1.A.43) family.

The protein resides in the cell inner membrane. The enzyme catalyses fluoride(in) = fluoride(out). With respect to regulation, na(+) is not transported, but it plays an essential structural role and its presence is essential for fluoride channel function. Its function is as follows. Fluoride-specific ion channel. Important for reducing fluoride concentration in the cell, thus reducing its toxicity. The polypeptide is Fluoride-specific ion channel FluC 2 (Prochlorococcus marinus (strain NATL2A)).